We begin with the raw amino-acid sequence, 530 residues long: Autoinducer-2 kinase (530 aa).

Belongs to the FGGY kinase family.

It is found in the cytoplasm. It carries out the reaction (S)-4,5-dihydroxypentane-2,3-dione + ATP = (2S)-2-hydroxy-3,4-dioxopentyl phosphate + ADP + H(+). Catalyzes the phosphorylation of autoinducer-2 (AI-2) to phospho-AI-2, which subsequently inactivates the transcriptional regulator LsrR and leads to the transcription of the lsr operon. Phosphorylates the ring-open form of (S)-4,5-dihydroxypentane-2,3-dione (DPD), which is the precursor to all AI-2 signaling molecules, at the C5 position. The sequence is that of Autoinducer-2 kinase from Yersinia pseudotuberculosis serotype O:3 (strain YPIII).